The following is a 382-amino-acid chain: Protein RecA (382 aa).

Residues 1-20 (MPADVKAAQSSAGDSRPGER) form a disordered region. 79 to 86 (GPESSGKT) is a binding site for ATP. Residues 360 to 369 (SAAAKPSAKT) are compositionally biased toward low complexity. The disordered stretch occupies residues 360-382 (SAAAKPSAKTADTDKKLVADGAA). Positions 370–382 (ADTDKKLVADGAA) are enriched in basic and acidic residues.

This sequence belongs to the RecA family.

It is found in the cytoplasm. Can catalyze the hydrolysis of ATP in the presence of single-stranded DNA, the ATP-dependent uptake of single-stranded DNA by duplex DNA, and the ATP-dependent hybridization of homologous single-stranded DNAs. It interacts with LexA causing its activation and leading to its autocatalytic cleavage. The polypeptide is Protein RecA (Synechococcus sp. (strain CC9311)).